Reading from the N-terminus, the 259-residue chain is Deoxyribose-phosphate aldolase (259 aa).

The Proton donor/acceptor role is filled by aspartate 102. The active-site Schiff-base intermediate with acetaldehyde is the lysine 167. Lysine 201 functions as the Proton donor/acceptor in the catalytic mechanism.

This sequence belongs to the DeoC/FbaB aldolase family. DeoC type 2 subfamily.

It is found in the cytoplasm. It carries out the reaction 2-deoxy-D-ribose 5-phosphate = D-glyceraldehyde 3-phosphate + acetaldehyde. It participates in carbohydrate degradation; 2-deoxy-D-ribose 1-phosphate degradation; D-glyceraldehyde 3-phosphate and acetaldehyde from 2-deoxy-alpha-D-ribose 1-phosphate: step 2/2. Its function is as follows. Catalyzes a reversible aldol reaction between acetaldehyde and D-glyceraldehyde 3-phosphate to generate 2-deoxy-D-ribose 5-phosphate. This is Deoxyribose-phosphate aldolase from Shigella flexneri.